The sequence spans 215 residues: Ribose-5-phosphate isomerase A (215 aa).

Residues 26–29, 79–82, and 92–95 each bind substrate; these read TGST, DGAD, and KGGG. Glu-101 serves as the catalytic Proton acceptor. Residue Lys-119 coordinates substrate.

This sequence belongs to the ribose 5-phosphate isomerase family. Homodimer.

The catalysed reaction is aldehydo-D-ribose 5-phosphate = D-ribulose 5-phosphate. It functions in the pathway carbohydrate degradation; pentose phosphate pathway; D-ribose 5-phosphate from D-ribulose 5-phosphate (non-oxidative stage): step 1/1. Its function is as follows. Catalyzes the reversible conversion of ribose-5-phosphate to ribulose 5-phosphate. This is Ribose-5-phosphate isomerase A from Xanthomonas axonopodis pv. citri (strain 306).